Reading from the N-terminus, the 425-residue chain is tRNA(Ile)-lysidine synthase (425 aa).

27 to 32 (SGGLDS) contacts ATP.

This sequence belongs to the tRNA(Ile)-lysidine synthase family.

It localises to the cytoplasm. The catalysed reaction is cytidine(34) in tRNA(Ile2) + L-lysine + ATP = lysidine(34) in tRNA(Ile2) + AMP + diphosphate + H(+). Its function is as follows. Ligates lysine onto the cytidine present at position 34 of the AUA codon-specific tRNA(Ile) that contains the anticodon CAU, in an ATP-dependent manner. Cytidine is converted to lysidine, thus changing the amino acid specificity of the tRNA from methionine to isoleucine. This is tRNA(Ile)-lysidine synthase from Streptococcus gordonii (strain Challis / ATCC 35105 / BCRC 15272 / CH1 / DL1 / V288).